Reading from the N-terminus, the 700-residue chain is DNA ligase (700 aa).

NAD(+) is bound by residues 42–46, 91–92, and Glu126; these read DDEYD and SL. Residue Lys128 is the N6-AMP-lysine intermediate of the active site. NAD(+)-binding residues include Arg149, Glu184, Lys300, and Lys324. Cys418, Cys421, Cys436, and Cys441 together coordinate Zn(2+). The region spanning 598 to 686 is the BRCT domain; sequence TRTDQLSGLN…GLGERGVAED (89 aa).

This sequence belongs to the NAD-dependent DNA ligase family. LigA subfamily. Mn(2+) serves as cofactor.

It catalyses the reaction NAD(+) + (deoxyribonucleotide)n-3'-hydroxyl + 5'-phospho-(deoxyribonucleotide)m = (deoxyribonucleotide)n+m + AMP + beta-nicotinamide D-nucleotide.. Functionally, DNA ligase that catalyzes the formation of phosphodiester linkages between 5'-phosphoryl and 3'-hydroxyl groups in double-stranded DNA using NAD as a coenzyme and as the energy source for the reaction. It is essential for DNA replication and repair of damaged DNA. In Deinococcus radiodurans (strain ATCC 13939 / DSM 20539 / JCM 16871 / CCUG 27074 / LMG 4051 / NBRC 15346 / NCIMB 9279 / VKM B-1422 / R1), this protein is DNA ligase.